The primary structure comprises 586 residues: Asparagine synthetase [glutamine-hydrolyzing] 1 (586 aa).

Cysteine 2 acts as the For GATase activity in catalysis. In terms of domain architecture, Glutamine amidotransferase type-2 spans 2-185 (CGILAVLGCS…PGHLYSSRER (184 aa)). L-glutamine is bound by residues 50–54 (RLAIV), 75–77 (NGE), and aspartate 98. The Asparagine synthetase domain occupies 193 to 516 (PTWFSESIPS…PQNSARLTVP (324 aa)). ATP is bound by residues leucine 231, valine 267, and 341 to 342 (SG).

The enzyme catalyses L-aspartate + L-glutamine + ATP + H2O = L-asparagine + L-glutamate + AMP + diphosphate + H(+). It participates in amino-acid biosynthesis; L-asparagine biosynthesis; L-asparagine from L-aspartate (L-Gln route): step 1/1. The chain is Asparagine synthetase [glutamine-hydrolyzing] 1 (AS1) from Lotus japonicus (Lotus corniculatus var. japonicus).